Reading from the N-terminus, the 509-residue chain is Cation transporter HKT2;4 (509 aa).

Residues 1 to 32 are Cytoplasmic-facing; it reads MPIRLHIFVSSARHAINSSALICRFIAFHLSP. Helical transmembrane passes span 33 to 53 and 96 to 116; these read LLIHLSYFLIIDVLGFVALVV and VLTLLMFLGSEMFLSFLGLVL. At 117 to 164 the chain is on the cytoplasmic side; that stretch reads ESSKQNKHDPENRRVSSVTVCEQSHLEEAIPQTPSMNSTDIKRSCHKY. Transmembrane regions (helical) follow at residues 165-185 and 237-257; these read LVFVVLAYMIIILVTGSLLVF and GLLLLLIGQILAGSTLLPMFL. Topologically, residues 258-296 are cytoplasmic; sequence RLVIWALRGLRLAKAEEPDFMMNNSSSVGFSHLLPNLQT. The next 2 membrane-spanning stretches (helical) occupy residues 297–317 and 353–373; these read IFLAAVEVAFVGMTVILFCCL and CSLVAPAALVLFMVMMYTPSL. The Cytoplasmic segment spans residues 374–400; sequence TKLFSACQDHKQIGPESDDRTSKGKPF. A run of 2 helical transmembrane segments spans residues 401–421 and 476–496; these read LKTMAFSPLAFNTTVIMLVCI and SFSGWWSEPGKLILVLAMLYG. Over 497-509 the chain is Cytoplasmic; it reads RLNSKDSTSARTR.

It belongs to the TrkH potassium transport family. HKT (TC 2.A.38.3) subfamily. In terms of tissue distribution, expressed in spikelets, leaf blades, leaf sheaths, internodes, nodes, the base of stems and roots.

The protein resides in the cell membrane. The enzyme catalyses K(+)(in) = K(+)(out). It catalyses the reaction Mg(2+)(in) = Mg(2+)(out). It carries out the reaction Ca(2+)(in) = Ca(2+)(out). Its function is as follows. High-affinity potassium transporter that does not show potassium-sodium cotransport. Potassium transport seems to be independent of sodium. Mediates transport of the divalent cations magnesium and calcium in the absence of competing potassium ions. Selectivity for potassium is dominant over divalent cations, and magnesium and calcium transport may be small and may depend on competing potassium concentrations. The polypeptide is Cation transporter HKT2;4 (Oryza sativa subsp. japonica (Rice)).